The following is a 282-amino-acid chain: Undecaprenyl-diphosphatase (282 aa).

The next 7 membrane-spanning stretches (helical) occupy residues 39–59, 85–105, 115–135, 153–173, 196–216, 230–250, and 260–280; these read PGAAFTAIVQMGTLAAVLIYF, ATMGWMIAAGTIPIVFFGLLF, SLYWISAALIGLALILWLTEV, IGWKEALLIGVAQSIALIPGS, FSFLLSLPSVLAAALLQLYET, LLVATIAAGVVGYASIAFLIT, and FIIYRIVIGVAILGLIATGAI.

It belongs to the UppP family.

The protein localises to the cell inner membrane. The catalysed reaction is di-trans,octa-cis-undecaprenyl diphosphate + H2O = di-trans,octa-cis-undecaprenyl phosphate + phosphate + H(+). In terms of biological role, catalyzes the dephosphorylation of undecaprenyl diphosphate (UPP). Confers resistance to bacitracin. This is Undecaprenyl-diphosphatase from Chlorobium chlorochromatii (strain CaD3).